Here is a 49-residue protein sequence, read N- to C-terminus: Large ribosomal subunit protein bL33 (49 aa).

This sequence belongs to the bacterial ribosomal protein bL33 family.

In Finegoldia magna (strain ATCC 29328 / DSM 20472 / WAL 2508) (Peptostreptococcus magnus), this protein is Large ribosomal subunit protein bL33.